Reading from the N-terminus, the 189-residue chain is Threonylcarbamoyl-AMP synthase (189 aa).

In terms of domain architecture, YrdC-like spans 3-189 (TTSVTEAAEC…NALTGEVIRP (187 aa)).

It belongs to the SUA5 family. TsaC subfamily.

It is found in the cytoplasm. The catalysed reaction is L-threonine + hydrogencarbonate + ATP = L-threonylcarbamoyladenylate + diphosphate + H2O. In terms of biological role, required for the formation of a threonylcarbamoyl group on adenosine at position 37 (t(6)A37) in tRNAs that read codons beginning with adenine. Catalyzes the conversion of L-threonine, HCO(3)(-)/CO(2) and ATP to give threonylcarbamoyl-AMP (TC-AMP) as the acyladenylate intermediate, with the release of diphosphate. This chain is Threonylcarbamoyl-AMP synthase, found in Acinetobacter baumannii (strain ACICU).